Reading from the N-terminus, the 122-residue chain is Large ribosomal subunit protein uL14 (122 aa).

This sequence belongs to the universal ribosomal protein uL14 family. Part of the 50S ribosomal subunit. Forms a cluster with proteins L3 and L19. In the 70S ribosome, L14 and L19 interact and together make contacts with the 16S rRNA in bridges B5 and B8.

In terms of biological role, binds to 23S rRNA. Forms part of two intersubunit bridges in the 70S ribosome. The polypeptide is Large ribosomal subunit protein uL14 (Alkalilimnicola ehrlichii (strain ATCC BAA-1101 / DSM 17681 / MLHE-1)).